The sequence spans 263 residues: Sulfur carrier protein FdhD (263 aa).

Cysteine 107 serves as the catalytic Cysteine persulfide intermediate.

The protein belongs to the FdhD family.

Its subcellular location is the cytoplasm. Functionally, required for formate dehydrogenase (FDH) activity. Acts as a sulfur carrier protein that transfers sulfur from IscS to the molybdenum cofactor prior to its insertion into FDH. This Geobacillus kaustophilus (strain HTA426) protein is Sulfur carrier protein FdhD.